Reading from the N-terminus, the 1432-residue chain is Superkiller protein 3 (1432 aa).

2 TPR repeats span residues 4-37 (IKQLLKEAKQELTNRDYEETIEISEKVLKLDPDN) and 47-80 (ALSSLPASNNVSSNRNLERATNHYVSAAKLVPDN). Residues 339-397 (SANKPPEGHKKTEKETDIKDVDETNEDEVKDRVEDEVKDRVEDEVKDQDEEAKEDEEED) are disordered. The span at 344-381 (PEGHKKTEKETDIKDVDETNEDEVKDRVEDEVKDRVED) shows a compositional bias: basic and acidic residues. The span at 382–397 (EVKDQDEEAKEDEEED) shows a compositional bias: acidic residues. TPR repeat units follow at residues 425-458 (ILAHRILCQYYLLTKEYEAALPYIKNGISLIAYN), 471-507 (REFSLDLATVYTYVDAPKDHNAALKLYDNILSGDFSN), 508-541 (IQAKMGKGIIFIERKNWKDAMTLLTQVHEQSPNN), 627-661 (APGFSTLGDIYCHYYKDHLRAFKCYFKAFDLDAGD), 702-735 (NWPFRVVGIAHLEKQEESDSIEWFQSALRVDPND), 736-769 (VESWVGLGQAYHACGRIEASIKVFDKAIQLRPSH), 945-985 (ASYW…QSNT), 987-1018 (ETWIGLGIATMDINFRVSQHCFIKATALEPKA), and 1226-1259 (ISNHICLGLSYFFLNDFDQTLNQFQELLSISKDS).

The protein belongs to the SKI3 family. As to quaternary structure, component of the SKI complex composed of at least SKI2, SKI3 and SKI8. The SKI complex interacts with SKI7, which makes the link between the SKI complex and the exosome in order to perform mRNA degradation.

It is found in the cytoplasm. The protein localises to the nucleus. In terms of biological role, component of the SKI complex involved in 3'-mRNA degradation pathway. Represses dsRNA virus propagation by specifically blocking translation of viral mRNAs, perhaps recognizing the absence of CAP or poly(A). Essential for cell growth only in the presence of M1 replicon. This Saccharomyces cerevisiae (strain ATCC 204508 / S288c) (Baker's yeast) protein is Superkiller protein 3 (SKI3).